Consider the following 372-residue polypeptide: Steroid C26-monooxygenase (372 aa).

Cysteine 314 contacts heme.

Belongs to the cytochrome P450 family. Requires heme as cofactor.

The catalysed reaction is cholest-4-en-3-one + 6 reduced [2Fe-2S]-[ferredoxin] + 3 O2 + 5 H(+) = (25R)-3-oxocholest-4-en-26-oate + 6 oxidized [2Fe-2S]-[ferredoxin] + 4 H2O. It participates in steroid metabolism; cholesterol degradation. Functionally, involved in the utilization of cholesterol as the sole carbon and energy source by degrading the side chain during infection. Primarily catalyzes the sequential oxidation of the terminal methyl of cholest-4-en-3-one into (25R)-26-hydroxycholest-4-en-3-one (alcohol), (25R)-26-oxocholest-4-en-3-one (aldehyde), to finally yield the carboxylic acid (25R)-3-oxocholest-4-en-26-oate. Also able to sequentially oxidize cholesterol itself, not only cholest-4-en-3-one. The polypeptide is Steroid C26-monooxygenase (cyp142) (Mycobacterium tuberculosis (strain CDC 1551 / Oshkosh)).